Here is a 361-residue protein sequence, read N- to C-terminus: MPRLGRFAINAKNYFLTYPRCPLTKEDVLEQLLALSTPVNKKFIRVCRELHEDGEPHLHVLLQFEGKLQTKNERFFDLVSPTRSTHYHPNIQAAKSASDVKSYMDKDGDVLDHGSFQVDGRSARGGKQSANDAYAEALNSGSKLQALNILREKAPKDYILQFHNLNCNLSRIFADDVPPYVSPYSLSAFDKVPSYISSWASENVRDSCAPERPISIVIEGDSRTGKTMWARALGPHNYLCGHLDLNSKIYSNDAWYNVIDDVDPHYLKHFKEFMGAQRDWQSNVKYGKPTHIKGGIPTIFLCNPGPKSSYKEYLDEPDNTALKLWASKNAEFYTLKEPLFSSVDQGATQGCQEASNSTLSN.

The CRESS-DNA virus Rep endonuclease domain maps to 8-116; sequence AINAKNYFLT…DGDVLDHGSF (109 aa). The RCR-1 motif lies at 15 to 18; sequence FLTY. Residues Glu-49, His-57, and His-59 each contribute to the a divalent metal cation site. Residues 57–59 carry the RCR-2 motif; the sequence is HLH. The active-site For DNA cleavage activity is the Tyr-103. The RCR-3 signature appears at 103 to 106; it reads YMDK. Asp-107 is a binding site for a divalent metal cation. The segment at 143-153 is binding to RBR1; the sequence is KLQALNILREK. The interval 156 to 176 is oligomerization; it reads KDYILQFHNLNCNLSRIFADD. 220–227 is a binding site for ATP; the sequence is GDSRTGKT.

This sequence belongs to the geminiviridae Rep protein family. As to quaternary structure, homooligomer. Interacts with the replication enhancer protein (REn). Interacts with host retinoblastoma-related protein 1 (RBR1), and may thereby induce the transcription of host replicative enzymes even if the cell is not dividing anymore. Interacts with host PCNA. Interacts with host SCE1 protein. Binds to host RAD54 protein to ensure geminiviral replication. Requires Mg(2+) as cofactor. Mn(2+) is required as a cofactor.

The protein localises to the host nucleus. Its function is as follows. Essential for the replication of viral ssDNA. The closed circular ssDNA genome is first converted to a superhelical dsDNA. Rep binds a specific region at the genome origin of replication. It introduces an endonucleolytic nick within the conserved sequence 5'-TAATATTAC-3' in the intergenic region of the genome present in all geminiviruses, thereby initiating the rolling circle replication (RCR). Following cleavage, binds covalently to the 5'-phosphate of DNA as a tyrosyl ester. The cleavage gives rise to a free 3'-OH that serves as a primer for the cellular DNA polymerase. The polymerase synthesizes the (+) strand DNA by rolling circle mechanism. After one round of replication, a Rep-catalyzed nucleotidyl transfer reaction releases a circular single-stranded virus genome, thereby terminating the replication. Displays origin-specific DNA cleavage, nucleotidyl transferase, ATPase and helicase activities. This is Replication-associated protein from Mungbean yellow mosaic virus (strain Vigna) (MYMV).